Here is a 40-residue protein sequence, read N- to C-terminus: Snaclec tokaracetin subunit alpha (40 aa).

Residues 1 to 40 (DCPSGWSSFKQYCYKPFKQLKTWEDAERFCLEQVKGAHLV) form the C-type lectin domain. Cys-2 and Cys-13 are joined by a disulfide.

The protein belongs to the snaclec family. Heterodimer of subunits alpha and beta; disulfide-linked. In terms of tissue distribution, expressed by the venom gland.

It is found in the secreted. Functionally, platelet antagonist that specifically and reversibly binds to a site on platelet glycoprotein Ibalpha (GP1BA) close to or identical with the site for vWF binding. It inhibits the binding of vWF to platelets and vWF-dependent shear-induced platelet aggregation. In Protobothrops tokarensis (Tokara habu), this protein is Snaclec tokaracetin subunit alpha.